Consider the following 277-residue polypeptide: Heme oxygenase (277 aa).

His29 serves as a coordination point for heme b.

The protein belongs to the heme oxygenase family.

Its subcellular location is the microsome. The protein localises to the endoplasmic reticulum. It catalyses the reaction heme b + 3 reduced [NADPH--hemoprotein reductase] + 3 O2 = biliverdin IXalpha + CO + Fe(2+) + 3 oxidized [NADPH--hemoprotein reductase] + 3 H2O + H(+). In terms of biological role, heme oxygenase cleaves the heme ring at the alpha methene bridge to form biliverdin. Biliverdin is subsequently converted to bilirubin by biliverdin reductase. Under physiological conditions, the activity of heme oxygenase is highest in the spleen, where senescent erythrocytes are sequestrated and destroyed. This Takifugu rubripes (Japanese pufferfish) protein is Heme oxygenase (hmox).